The following is a 372-amino-acid chain: Serine/threonine-protein kinase 17B (372 aa).

The Protein kinase domain maps to 33–293 (TLTPKELGRG…AESCLSHSWL (261 aa)). ATP-binding positions include 39–47 (LGRGKFAVV) and Lys62. Asp158 acts as the Proton acceptor in catalysis. The tract at residues 305-348 (EETSGSSQIQDLTLRSSEEKTSKSSCNGSCGAREDKENIPEDGS) is disordered. Residues 307–319 (TSGSSQIQDLTLR) are compositionally biased toward polar residues.

It belongs to the protein kinase superfamily. CAMK Ser/Thr protein kinase family. DAP kinase subfamily. In terms of assembly, interacts with CHP1; the interaction induces CHP1 to translocate from the Golgi to the nucleus. Post-translationally, autophosphorylated.

It is found in the nucleus. It localises to the cell membrane. The protein localises to the endoplasmic reticulum-Golgi intermediate compartment. The catalysed reaction is L-seryl-[protein] + ATP = O-phospho-L-seryl-[protein] + ADP + H(+). The enzyme catalyses L-threonyl-[protein] + ATP = O-phospho-L-threonyl-[protein] + ADP + H(+). Acts as a positive regulator of apoptosis. Phosphorylates myosin light chains. The sequence is that of Serine/threonine-protein kinase 17B (Stk17b) from Mus musculus (Mouse).